Reading from the N-terminus, the 770-residue chain is NAD-dependent malic enzyme (770 aa).

The malic enzyme stretch occupies residues 1–440; that stretch reads MNTGDKAKSQ…KLNRFVFRSG (440 aa). Lysine 107 acts as the Proton acceptor in catalysis. A divalent metal cation contacts are provided by glutamate 149 and aspartate 150. 2 residues coordinate NAD(+): aspartate 175 and asparagine 300. The phosphate acetyltransferase stretch occupies residues 441-770; it reads FIMKPVFAAA…LAVVESSHPV (330 aa).

In the N-terminal section; belongs to the malic enzymes family. The protein in the C-terminal section; belongs to the phosphate acetyltransferase and butyryltransferase family. As to quaternary structure, homooctamer. Mg(2+) is required as a cofactor. It depends on Mn(2+) as a cofactor.

It carries out the reaction (S)-malate + NAD(+) = pyruvate + CO2 + NADH. Subject to substrate inhibition and shows allosteric regulation by acetyl-CoA. Its function is as follows. Required for symbiotic nitrogen fixation. Plays a key role in the conversion of malate to acetyl-CoA for efficient tricarboxylic acid cycle function in nitrogen-fixating bacteria. The polypeptide is NAD-dependent malic enzyme (dme) (Rhizobium meliloti (strain 1021) (Ensifer meliloti)).